We begin with the raw amino-acid sequence, 2238 residues long: MFKKLKQKISEEQQQLQQALAPAQASSSSSTPTRTRSRTSSFTDQLDDVTPNRENASTQATKSPDGVSKDESSPSQSGDTQTFAQKLQLRVPSMESLFRSPIKESLFRSSKEPLVRTSSRESLNQLDLDCSAAAFDPPSDMESEAEDAPWNSDGLSREQLLQRLRRMERSLSSYRGKYSELVTAFQTLQREKKKLQGILSQSQDKSLRRISELREELQMDQQAKKHLQDEFDACLEEKDQYISVLQTQVSLLKQRLQNGPMNVDAPKPLPPGELQAEVHGDTEKMEGVGEPVGGGTSAKTLEMLQQRVKRQENLLQRCKETIGSHKEQCALLLSEKEALQEQLDERLQELEKMKELHMAEKTKLITQLRDAKNLIEQLEQDKGMVITETKRQMLETLELKEDEIAQLRSHIKQMTTQGEELREQKEKSERAAFEELEKALSTAQKTEDAQRRMKMEMDEQMKAVERASEEERLRLQHELSRVRQEAASMAKKNSEEQVAALQKLHAEELASKEQELSRRLEARERELQEQMRIALEKSRSEYLKLTQEKEQQESLALEELELQKKAILTESENKLQELGQEAEAYRTRILELETSLEKSLQESKTQSEHLAVHLEAEKNKHNKELTALAEQHRTEVEGLQQQQDSLWTERLQSLSQQHQAAVEELREKYQQEKDALLKEKESLFQAHIQDMNEKTLEKLDKKQMELESVSSELSEALRARDQLAEELSVLRGDADKMKQALEAELEEQRRHHQREVGSISEQQELTVRRAEKALKDELSRLGALLDERDEHLRERQARVQDLEAHLQKSAGELQQALAKLDLLHSEQSAAREQAGAYEEQLAQMQQKVLDLETEKSLLTKQVVEMETHKKHVCEELDAQRAQVQQLERQRSELEEKVRSLAQLQDSQLKNSTVEKEQARQSLMEKENIILQMREEQAKEIEILKQTLSSKEESISILHEEYETKFKNQEKRMEKIKQKAKEMQETKKKLLDQEAKLKKELENTVLELSQKEKQFNAQILEMAQANSAGISDTVSRLEENQRQQIESLTGAHQRKLDDVIEAWEKKLSQQAAELRDKHAEQMEEKEQGLGELRQKVRIVQSEKEELTKEVARLKEAVSGQDVALAGLQGQLEQKSAVIVSLSERESQLQSQVEKLEADLGCSLSEKLSLQEELAELKLLADKSQLRVSELTGQVQAAEKELQSCKSLHELSKKSLEDKSLNLKSLLEELASQLDSRCERTKALLEAKTNELVCTSRDKADAILARLSQCQRHTATVGEALLRRMGQVSELEAQLTQLTEEQRTLKSSFQQVTNQLEEKEKQIKTMKADIEGLLTEKEALQQEGGQQRQAASEKESCITQLKKELAENINAVTLLREELSEKKSEIASLSKQLSDLGAQLESSISPSDKAEAISALSKQHEEQELQLQAQLQELSLKVDALSKEKMSALEQVDHWSNKFSEWKKKAQSRLAQHQSTIKDLQAQLDVKATDAREKEEQICLLKEDLDRQNKKFECLKGEMEVRKSKMEKKECDLETALKTQTARVVELEDCVTQRKKEVESLNETLKNYNQQRDTEHSGLVQRLQHLEELGEEKDNKVREAEETVLRLREHVSSLEAELGTVKKELEHVNSSVKSRDGELKALEDKLELESAAKVELKRKAEQKIAAIRKQLLSQMEEKTQRYAKDTENRLSELSAQLKEREKQVHSLEDKLKNLESSPHPEVPAVSRSMQSVAASPEQEAPDSQDCTHKACKERLCMLQRRLSEKEKLLRRLEQGEGEARPSQPEAQHRALSGKLDCTRARQLEDHVLIGCLPEELEEKMKCSLIVSQPMGEETGNNTGVKQNWASVVDSVQKTLQEKELTCQALEQRVKELESDLVRERGAHRLEVEKLTLKYEKSQSSQQEMDGENKCVEVLEDRPEENSQSHEIQSNVGTVDGLRSDLESKLTGAERDKQKLSKEVARLQKELRALRREHQQELDILKRECEQEAEEKLKQEQEDLELKHTSTLKQLMREFNTQLAQKEQELERTVQETIDKAQEVEAELLESHQEETQQLHRKIAEKEDDLRRTARRYEEILDAREEEMTGKVTDLQTQLEELQKKYQQRLEQEESTKDSVTILELQTQLAQKTTLISDSKLKEQELREQVHNLEDRLKRYEKNACAATVGTPYKGGNLYHTEVSLFGEPTEFEYLRKVMFEYMMGRETKTMAKVITTVLKFPDDQAQKILEREDARLMSWLRTSS.

The interval Met1 to Arg90 is disordered. Ser10 is subject to Phosphoserine. Positions Glu12 to Ser41 are enriched in low complexity. A Phosphothreonine modification is found at Thr39. Ser41 bears the Phosphoserine mark. Composition is skewed to polar residues over residues Asn52–Lys62 and Ser73–Gln85. Ser93 and Ser100 each carry phosphoserine. Disordered regions lie at residues Ala132–Gly154, Leu1695–Cys1744, and Leu1770–Leu1789. The tract at residues Gly154–Lys224 is interaction with MACF1. Residues Ser156 to Thr2161 adopt a coiled-coil conformation. A compositionally biased stretch (basic and acidic residues) spans Leu1695 to Asn1711. The GRIP domain maps to Leu2178–Arg2225.

In terms of assembly, homodimer. Interacts with GTP-bound ARL1 and ARL3. Interacts with MACF1. Directly interacts with TBC1D23. Interacts with FAM91A1; this interaction may be mediated by TBC1D23. Ubiquitous. Highly expressed in oligodendrocyte precursors, particularly at a stage just prior to myelination.

It localises to the cytoplasm. Its subcellular location is the golgi apparatus membrane. The protein localises to the golgi apparatus. It is found in the trans-Golgi network membrane. Involved in vesicular trafficking at the Golgi apparatus level. May play a role in delivery of transport vesicles containing GPI-linked proteins from the trans-Golgi network through its interaction with MACF1. Involved in endosome-to-Golgi trafficking. The polypeptide is Golgin subfamily A member 4 (Golga4) (Mus musculus (Mouse)).